A 216-amino-acid polypeptide reads, in one-letter code: Calcium-binding protein 2 (216 aa).

The tract at residues 1-41 is disordered; sequence MGNCAKTPWHRGSKERWQWPGSPLGGSRPSPGPRTEEQEGT. Residue Gly2 is the site of N-myristoyl glycine attachment. The span at 20–29 shows a compositional bias: low complexity; it reads PGSPLGGSRP. EF-hand domains are found at residues 74 to 109, 125 to 142, 148 to 183, and 185 to 216; these read EEIE…LGYM, GKVD…KLLA, IGVR…LLGE, and LSQR…MMSR. The Ca(2+) site is built by Asp87, Asp89, Asp91, Tyr93, and Glu98. Residues Asp161, Asn163, Asp165, Cys167, Glu172, Asp198, Asn200, Asp202, and Glu209 each coordinate Ca(2+).

Expressed in the inner hair cells (IHCs), outer hair cells,(OHCs) and vestibular hair cells within the ear and in the retina (at protein level). Expressed in the retinal cone type 6 ON-bipolar cells and type 1 OFF-bipolar cells (at protein level). Expressed in the organ of Corti and spiral ganglion neurons in the cochlea (at protein level).

It localises to the cytoplasm. The protein resides in the perinuclear region. Its subcellular location is the cell membrane. It is found in the golgi apparatus. Functionally, required for sound encoding at inner hair cells (IHCs) synapses, likely via inhibition of the inactivation of voltage-gated calcium channel of type 1.3 (Cav1.3) in the IHCs. Required for the normal transfer of light signals through the retina. This Mus musculus (Mouse) protein is Calcium-binding protein 2 (Cabp2).